Here is a 177-residue protein sequence, read N- to C-terminus: Transcriptional repressor NrdR (177 aa).

A zinc finger spans residues 3 to 34 (CPYCGGSETQVKDSRPSEDGAAIRRRRVCPDC). Residues 49–139 (VVVLKRSGKR…VYKNFREARD (91 aa)) enclose the ATP-cone domain. Residues 148 to 177 (SDGMPVPAAAPEAEGDPEPEASGRRRAGRP) are disordered.

Belongs to the NrdR family. It depends on Zn(2+) as a cofactor.

In terms of biological role, negatively regulates transcription of bacterial ribonucleotide reductase nrd genes and operons by binding to NrdR-boxes. This is Transcriptional repressor NrdR from Methylobacterium radiotolerans (strain ATCC 27329 / DSM 1819 / JCM 2831 / NBRC 15690 / NCIMB 10815 / 0-1).